A 144-amino-acid chain; its full sequence is D-aminoacyl-tRNA deacylase (144 aa).

The Gly-cisPro motif, important for rejection of L-amino acids motif lies at 136–137 (GP).

The protein belongs to the DTD family. Homodimer.

It localises to the cytoplasm. It catalyses the reaction glycyl-tRNA(Ala) + H2O = tRNA(Ala) + glycine + H(+). The enzyme catalyses a D-aminoacyl-tRNA + H2O = a tRNA + a D-alpha-amino acid + H(+). In terms of biological role, an aminoacyl-tRNA editing enzyme that deacylates mischarged D-aminoacyl-tRNAs. Also deacylates mischarged glycyl-tRNA(Ala), protecting cells against glycine mischarging by AlaRS. Acts via tRNA-based rather than protein-based catalysis; rejects L-amino acids rather than detecting D-amino acids in the active site. By recycling D-aminoacyl-tRNA to D-amino acids and free tRNA molecules, this enzyme counteracts the toxicity associated with the formation of D-aminoacyl-tRNA entities in vivo and helps enforce protein L-homochirality. The protein is D-aminoacyl-tRNA deacylase of Vibrio parahaemolyticus serotype O3:K6 (strain RIMD 2210633).